Consider the following 307-residue polypeptide: N-acetylmuramic acid 6-phosphate etherase (307 aa).

One can recognise an SIS domain in the interval 62 to 225 (VVDAFRVGGR…TTASMIRIGK (164 aa)). Catalysis depends on Glu90, which acts as the Proton donor. The active site involves Glu121.

It belongs to the GCKR-like family. MurNAc-6-P etherase subfamily. Homodimer.

It carries out the reaction N-acetyl-D-muramate 6-phosphate + H2O = N-acetyl-D-glucosamine 6-phosphate + (R)-lactate. The protein operates within amino-sugar metabolism; 1,6-anhydro-N-acetylmuramate degradation. It functions in the pathway amino-sugar metabolism; N-acetylmuramate degradation. It participates in cell wall biogenesis; peptidoglycan recycling. Functionally, specifically catalyzes the cleavage of the D-lactyl ether substituent of MurNAc 6-phosphate, producing GlcNAc 6-phosphate and D-lactate. Together with AnmK, is also required for the utilization of anhydro-N-acetylmuramic acid (anhMurNAc) either imported from the medium or derived from its own cell wall murein, and thus plays a role in cell wall recycling. This is N-acetylmuramic acid 6-phosphate etherase from Brucella anthropi (strain ATCC 49188 / DSM 6882 / CCUG 24695 / JCM 21032 / LMG 3331 / NBRC 15819 / NCTC 12168 / Alc 37) (Ochrobactrum anthropi).